Reading from the N-terminus, the 214-residue chain is Pyridoxine/pyridoxamine 5'-phosphate oxidase (214 aa).

Residues R9–Y12 and K67 each bind substrate. FMN-binding positions include R62 to K67, Y77 to T78, K84, and Q106. Positions 124, 128, and 132 each coordinate substrate. Residues Q141–S142 and W186 each bind FMN. R192 to H194 lines the substrate pocket. Residue R196 participates in FMN binding.

The protein belongs to the pyridoxamine 5'-phosphate oxidase family. Homodimer. FMN serves as cofactor.

The enzyme catalyses pyridoxamine 5'-phosphate + O2 + H2O = pyridoxal 5'-phosphate + H2O2 + NH4(+). It catalyses the reaction pyridoxine 5'-phosphate + O2 = pyridoxal 5'-phosphate + H2O2. Its pathway is cofactor metabolism; pyridoxal 5'-phosphate salvage; pyridoxal 5'-phosphate from pyridoxamine 5'-phosphate: step 1/1. It participates in cofactor metabolism; pyridoxal 5'-phosphate salvage; pyridoxal 5'-phosphate from pyridoxine 5'-phosphate: step 1/1. Catalyzes the oxidation of either pyridoxine 5'-phosphate (PNP) or pyridoxamine 5'-phosphate (PMP) into pyridoxal 5'-phosphate (PLP). The polypeptide is Pyridoxine/pyridoxamine 5'-phosphate oxidase (Gloeothece citriformis (strain PCC 7424) (Cyanothece sp. (strain PCC 7424))).